Consider the following 829-residue polypeptide: E3 ubiquitin-protein ligase Jade-2 (829 aa).

The segment at 1–52 (MEEKRRKYSISSDNSDTTDGHVTSTSASRCSKLPSSTKSGWPRQNEKKPSEV) is disordered. Phosphoserine occurs at positions 9 and 15. The span at 9–39 (SISSDNSDTTDGHVTSTSASRCSKLPSSTKS) shows a compositional bias: polar residues. An N6-acetyllysine mark is found at K32 and K38. Position 117 is a phosphoserine (S117). Residues 199–249 (DVVCDVCRSPEGEDGNEMVFCDKCNVCVHQACYGILKVPTGSWLCRTCALG) form a PHD-type 1 zinc finger. A C2HC pre-PHD-type zinc finger spans residues 251 to 285 (QPKCLLCPKRGGALKPTRSGTKWVHVSCALWIPEV). K298 is subject to N6-acetyllysine. The segment at 309-365 (LSCSLCKECTGTCIQCSMPSCITAFHVTCAFDRGLEMRTILADNDEVKFKSLCQEHS) adopts a PHD-type 2 zinc-finger fold. Disordered stretches follow at residues 362–383 (QEHS…PSQA), 517–555 (REPS…AGPE), and 622–817 (SFMR…REAG). Positions 522–535 (RRSKGKKNDSKRKG) are enriched in basic residues. Residues 536 to 552 (REGPKGSSPEKKEKVKA) show a composition bias toward basic and acidic residues. Residues 637–650 (KARGRTRLPAKKKP) are compositionally biased toward basic residues. Residues 776–786 (ERPKVSLHFDT) are compositionally biased toward basic and acidic residues. The span at 792–806 (FSDEEMSDSEVEAED) shows a compositional bias: acidic residues.

The protein belongs to the JADE family. In terms of assembly, component of the HBO1 complex composed at least of ING4 or ING5, MYST2/HBO1, MEAF6, and one of JADE1, JADE2 and JADE3. Interacts (via C-terminus) with KDM1A (via AOD/Tower domain).

The enzyme catalyses S-ubiquitinyl-[E2 ubiquitin-conjugating enzyme]-L-cysteine + [acceptor protein]-L-lysine = [E2 ubiquitin-conjugating enzyme]-L-cysteine + N(6)-ubiquitinyl-[acceptor protein]-L-lysine.. The protein operates within protein modification; protein ubiquitination. Scaffold subunit of some HBO1 complexes, which have a histone H4 acetyltransferase activity. Acts as a E3 ubiquitin-protein ligase mediating the ubiquitination and subsequent proteasomal degradation of target protein histone demethylase KDM1A. Also acts as a ubiquitin ligase E3 toward itself. Positive regulator of neurogenesis. The chain is E3 ubiquitin-protein ligase Jade-2 (Jade2) from Mus musculus (Mouse).